We begin with the raw amino-acid sequence, 349 residues long: MPIIDFEIWKLWLFRSIKAIVIIFLVGFSIVLPVDSIVQAAESSNTALNTFIVVGALVAFGLVSIIIIVGRIIFCRSCIQDIPRRYLPITPNDLPHRGSRKMIMENMEKSKELSILFKKPKEPVIHAGLEPPSRCDDPRYEKLFPDYLNYRSCIKSLSDRLKYQGIFLNNMNIDMKLGETFADVVSNQFTRNTRNKTQIDNSKKFIDLYETIRYSGREVTRQQFIDFVSLAIYFVEVSLTRDDRSPALGELNTGSQLQFNFDNGTWENDVSNYSFPNDAYSNGADYYYPESINYLKRTNSTSTVARKVPSFVPTNPEEEHKMALDPQDPVSHKPSMHTLADSFKYVTHR.

Over Met-1 to Lys-18 the chain is Cytoplasmic. The chain crosses the membrane as a helical span at residues Ala-19–Gln-39. Residues Ala-40–Asn-49 lie on the Extracellular side of the membrane. Residues Thr-50–Gly-70 traverse the membrane as a helical segment. Residues Arg-71–Arg-349 lie on the Cytoplasmic side of the membrane. Residues Val-312 to Lys-333 are disordered.

It belongs to the DLT1 family.

It localises to the membrane. Its function is as follows. Required for growth under high-pressure and low-temperature conditions. The polypeptide is Defect at low temperature protein 1 (DLT1) (Zygosaccharomyces rouxii (strain ATCC 2623 / CBS 732 / NBRC 1130 / NCYC 568 / NRRL Y-229)).